Here is a 58-residue protein sequence, read N- to C-terminus: UPF0434 protein Sfri_2386 (58 aa).

It belongs to the UPF0434 family.

The protein is UPF0434 protein Sfri_2386 of Shewanella frigidimarina (strain NCIMB 400).